A 942-amino-acid polypeptide reads, in one-letter code: UvrABC system protein A (942 aa).

32 to 39 (GLSGSGKS) contributes to the ATP binding site. A C4-type zinc finger spans residues 251 to 278 (CPVCGFTVPELEPRLFSFNAPFGSCPTC). ABC transporter domains lie at 308 to 589 (WNPI…KKSI) and 609 to 937 (GNGR…HYLK). 641 to 648 (GVSGSGKS) contributes to the ATP binding site. The C4-type zinc-finger motif lies at 740-766 (CEACSGDGIIKIEMHFLPDVYVPCEVC).

Belongs to the ABC transporter superfamily. UvrA family. As to quaternary structure, forms a heterotetramer with UvrB during the search for lesions.

Its subcellular location is the cytoplasm. Its function is as follows. The UvrABC repair system catalyzes the recognition and processing of DNA lesions. UvrA is an ATPase and a DNA-binding protein. A damage recognition complex composed of 2 UvrA and 2 UvrB subunits scans DNA for abnormalities. When the presence of a lesion has been verified by UvrB, the UvrA molecules dissociate. The polypeptide is UvrABC system protein A (Streptococcus pyogenes serotype M6 (strain ATCC BAA-946 / MGAS10394)).